A 328-amino-acid chain; its full sequence is Phosphatidylglycerol--prolipoprotein diacylglyceryl transferase (328 aa).

3 consecutive transmembrane segments (helical) span residues 15–35 (VIQGIPITWYSLSYILIILIS), 57–77 (IFMFSLVLGAILGGRLASTLV), and 106–126 (GMAIHGGFLGAIIAPLITINT). R156 is an a 1,2-diacyl-sn-glycero-3-phospho-(1'-sn-glycerol) binding site. The next 2 membrane-spanning stretches (helical) occupy residues 242–262 (GFIFGVYVMLYAFFRFFIEYL) and 289–309 (ISMGQILSLTLMLSGLIWIIV).

This sequence belongs to the Lgt family.

Its subcellular location is the cell inner membrane. It carries out the reaction L-cysteinyl-[prolipoprotein] + a 1,2-diacyl-sn-glycero-3-phospho-(1'-sn-glycerol) = an S-1,2-diacyl-sn-glyceryl-L-cysteinyl-[prolipoprotein] + sn-glycerol 1-phosphate + H(+). It functions in the pathway protein modification; lipoprotein biosynthesis (diacylglyceryl transfer). Functionally, catalyzes the transfer of the diacylglyceryl group from phosphatidylglycerol to the sulfhydryl group of the N-terminal cysteine of a prolipoprotein, the first step in the formation of mature lipoproteins. The protein is Phosphatidylglycerol--prolipoprotein diacylglyceryl transferase of Borreliella burgdorferi (strain ZS7) (Borrelia burgdorferi).